A 213-amino-acid chain; its full sequence is Receptor-binding cancer antigen expressed on SiSo cells (213 aa).

The Extracellular portion of the chain corresponds to 1–7; the sequence is MAITQFR. A helical; Signal-anchor for type III membrane protein membrane pass occupies residues 8-27; it reads LFKVCTCLATVFSFLKRLIC. At 28-213 the chain is on the cytoplasmic side; sequence RSGRGRKLSG…EQNKIGVKLS (186 aa). Residue serine 36 is modified to Phosphoserine. Residue threonine 41 is modified to Phosphothreonine. A Phosphotyrosine modification is found at tyrosine 94. Positions 163 to 211 form a coiled coil; it reads EDAAWQAEEVLRQQKIADREKRAAEQQRKKMEKEAQRLMKKEQNKIGVK. A compositionally biased stretch (basic and acidic residues) spans 179–206; the sequence is ADREKRAAEQQRKKMEKEAQRLMKKEQN. Positions 179–213 are disordered; sequence ADREKRAAEQQRKKMEKEAQRLMKKEQNKIGVKLS.

Homodimer. Widely expressed. Expressed in heart, brain, spleen, liver, kidney and testis.

Its subcellular location is the golgi apparatus membrane. In terms of biological role, may participate in suppression of cell proliferation and induces apoptotic cell death through activation of interleukin-1-beta converting enzyme (ICE)-like proteases. This chain is Receptor-binding cancer antigen expressed on SiSo cells (Ebag9), found in Mus musculus (Mouse).